We begin with the raw amino-acid sequence, 332 residues long: Adenosine deaminase (332 aa).

Histidine 12 and histidine 14 together coordinate Zn(2+). Substrate is bound by residues histidine 14, aspartate 16, and glycine 170. Residue histidine 197 coordinates Zn(2+). Glutamate 200 acts as the Proton donor in catalysis. Aspartate 278 provides a ligand contact to Zn(2+).

The protein belongs to the metallo-dependent hydrolases superfamily. Adenosine and AMP deaminases family. Adenosine deaminase subfamily. The cofactor is Zn(2+).

It catalyses the reaction adenosine + H2O + H(+) = inosine + NH4(+). It carries out the reaction 2'-deoxyadenosine + H2O + H(+) = 2'-deoxyinosine + NH4(+). Functionally, catalyzes the hydrolytic deamination of adenosine and 2-deoxyadenosine. The sequence is that of Adenosine deaminase from Clostridium perfringens (strain ATCC 13124 / DSM 756 / JCM 1290 / NCIMB 6125 / NCTC 8237 / Type A).